The following is a 396-amino-acid chain: Phosphoglycerate kinase (396 aa).

Substrate is bound by residues 21–23 (DFN), R37, 60–63 (HLGR), R121, and R154. ATP-binding positions include K205, G296, E327, and 353–356 (GGDS).

It belongs to the phosphoglycerate kinase family. In terms of assembly, monomer.

The protein localises to the cytoplasm. The catalysed reaction is (2R)-3-phosphoglycerate + ATP = (2R)-3-phospho-glyceroyl phosphate + ADP. Its pathway is carbohydrate degradation; glycolysis; pyruvate from D-glyceraldehyde 3-phosphate: step 2/5. The protein is Phosphoglycerate kinase of Anaeromyxobacter dehalogenans (strain 2CP-1 / ATCC BAA-258).